The sequence spans 579 residues: Isocitrate dehydrogenase kinase/phosphatase (579 aa).

Residues 324-330 (ADGTPGM) and Lys345 contribute to the ATP site. Asp380 is an active-site residue.

It belongs to the AceK family.

The protein localises to the cytoplasm. The catalysed reaction is L-seryl-[isocitrate dehydrogenase] + ATP = O-phospho-L-seryl-[isocitrate dehydrogenase] + ADP + H(+). Functionally, bifunctional enzyme which can phosphorylate or dephosphorylate isocitrate dehydrogenase (IDH) on a specific serine residue. This is a regulatory mechanism which enables bacteria to bypass the Krebs cycle via the glyoxylate shunt in response to the source of carbon. When bacteria are grown on glucose, IDH is fully active and unphosphorylated, but when grown on acetate or ethanol, the activity of IDH declines drastically concomitant with its phosphorylation. The chain is Isocitrate dehydrogenase kinase/phosphatase from Xanthomonas axonopodis pv. citri (strain 306).